The chain runs to 314 residues: Methionyl-tRNA formyltransferase (314 aa).

110–113 (SLLP) contributes to the (6S)-5,6,7,8-tetrahydrofolate binding site.

Belongs to the Fmt family.

The catalysed reaction is L-methionyl-tRNA(fMet) + (6R)-10-formyltetrahydrofolate = N-formyl-L-methionyl-tRNA(fMet) + (6S)-5,6,7,8-tetrahydrofolate + H(+). Attaches a formyl group to the free amino group of methionyl-tRNA(fMet). The formyl group appears to play a dual role in the initiator identity of N-formylmethionyl-tRNA by promoting its recognition by IF2 and preventing the misappropriation of this tRNA by the elongation apparatus. The protein is Methionyl-tRNA formyltransferase of Bacillus cereus (strain ATCC 14579 / DSM 31 / CCUG 7414 / JCM 2152 / NBRC 15305 / NCIMB 9373 / NCTC 2599 / NRRL B-3711).